Reading from the N-terminus, the 352-residue chain is Phosphatase Herzog (352 aa).

A prion-like domain necessary for both protein assembly and membrane targeting region spans residues 1–102 (MDATSIITQV…PLPDQQRYLL (102 aa)). The mediates substrate recognition stretch occupies residues 103–267 (PQVRLTDMHR…ELIPLFEKLS (165 aa)). Residues 108-266 (TDMHRKCMVI…RELIPLFEKL (159 aa)) form the FCP1 homology domain. 2 disordered regions span residues 284–310 (NNQT…LQQQ) and 332–352 (TMLN…LQKT).

Monomer. Forms higher-order protein aggregates with amyloid-like features during gastrulation. Interacts with babo, dah, Irk1, pch2, Ras64B, sax and Src64B.

The protein resides in the cell membrane. The enzyme catalyses O-phospho-L-seryl-[protein] + H2O = L-seryl-[protein] + phosphate. Its activity is regulated as follows. Phosphatase activity requires amyloid-like aggregation on the membrane. Prion-like membrane-associated phosphatase. Phosphatase activity depends on amyloid-like assembly at the membrane. Might have a role in establishment of segment polarity in embryos. This is Phosphatase Herzog from Drosophila melanogaster (Fruit fly).